The primary structure comprises 116 residues: Distal membrane-arm assembly complex protein 1 (116 aa).

A disordered region spans residues 1–39 (MGSRLSQPFESYITAPPGTAAAPAKPAPPATPGAPTSPA). Over residues 14 to 24 (TAPPGTAAAPA) the composition is skewed to low complexity. The next 2 membrane-spanning stretches (helical) occupy residues 52-69 (VLSG…YWVA) and 82-104 (WTIT…GIVV).

As to quaternary structure, interacts with incompletely assembled mitochondrial NADH:ubiquinone oxidoreductase complex (complex I).

The protein localises to the mitochondrion inner membrane. Functionally, required for the assembly of the mitochondrial NADH:ubiquinone oxidoreductase complex (complex I). Involved in the assembly of the distal region of complex I. The sequence is that of Distal membrane-arm assembly complex protein 1 from Homo sapiens (Human).